We begin with the raw amino-acid sequence, 351 residues long: Dihydroorotate dehydrogenase (quinone) (351 aa).

FMN is bound by residues 67–71 and Thr91; that span reads AGFDK. Lys71 is a binding site for substrate. Position 116 to 120 (116 to 120) interacts with substrate; the sequence is NAMGF. FMN is bound by residues Asn145 and Asn178. Asn178 is a substrate binding site. The active-site Nucleophile is Ser181. Asn183 is a substrate binding site. Residues Lys214 and Thr242 each coordinate FMN. Residue 243-244 coordinates substrate; it reads NT. FMN is bound by residues Gly262, Gly291, and 312 to 313; that span reads YS.

The protein belongs to the dihydroorotate dehydrogenase family. Type 2 subfamily. Monomer. FMN serves as cofactor.

It localises to the cell membrane. The catalysed reaction is (S)-dihydroorotate + a quinone = orotate + a quinol. The protein operates within pyrimidine metabolism; UMP biosynthesis via de novo pathway; orotate from (S)-dihydroorotate (quinone route): step 1/1. Its function is as follows. Catalyzes the conversion of dihydroorotate to orotate with quinone as electron acceptor. This is Dihydroorotate dehydrogenase (quinone) (pyrD) from Helicobacter pylori (strain ATCC 700392 / 26695) (Campylobacter pylori).